We begin with the raw amino-acid sequence, 287 residues long: Ribonuclease HII (287 aa).

One can recognise an RNase H type-2 domain in the interval 61-287 (ALQIGVDEAG…FAPVRKALES (227 aa)). Positions 67, 68, and 186 each coordinate a divalent metal cation.

It belongs to the RNase HII family. Requires Mn(2+) as cofactor. Mg(2+) serves as cofactor.

The protein resides in the cytoplasm. It carries out the reaction Endonucleolytic cleavage to 5'-phosphomonoester.. Its function is as follows. Endonuclease that specifically degrades the RNA of RNA-DNA hybrids. The sequence is that of Ribonuclease HII from Psychrobacter arcticus (strain DSM 17307 / VKM B-2377 / 273-4).